An 84-amino-acid polypeptide reads, in one-letter code: MMMNKNVLSSILFFMLIGSVLVESRPLGLTKTEEKFVASLFDGLSLGSIKDSGPSPGEGHKVVDRKDTFRFVKHSGPSPSGPGH.

The first 24 residues, 1–24 (MMMNKNVLSSILFFMLIGSVLVES), serve as a signal peptide directing secretion. The tract at residues 50–84 (KDSGPSPGEGHKVVDRKDTFRFVKHSGPSPSGPGH) is disordered. The span at 58 to 70 (EGHKVVDRKDTFR) shows a compositional bias: basic and acidic residues. Residues Pro-77 and Pro-79 each carry the 4-hydroxyproline modification.

In terms of processing, contains 4-hydroxyproline; hydroxylated on Pro-77 and Pro-79.

The protein localises to the secreted. It is found in the extracellular space. Its subcellular location is the apoplast. Endogenous secreted peptide that acts as elicitor of immune response and positive regulator of defense response. Amplifies the immune response triggered by flg22, the active epitope of bacterial flagellin. Acts as a negative regulator of root growth. This Arabidopsis thaliana (Mouse-ear cress) protein is PAMP-induced secreted peptide 2.